Reading from the N-terminus, the 230-residue chain is Sodium channel modifier 1 (230 aa).

A Phosphoserine modification is found at S2. The Bipartite nuclear localization signal motif lies at 4 to 20 (KREGDDWSQLNVLKKRR). The segment at 42-74 (FACAICPHRPVLDTLAMLTAHRAGKKHLSSLQL) adopts a Matrin-type zinc-finger fold. Residue K67 forms a Glycyl lysine isopeptide (Lys-Gly) (interchain with G-Cter in SUMO2) linkage. Disordered regions lie at residues 76 to 106 (YGKKPPGKGTEQNPRQHNELRREETTAEAPL) and 129 to 191 (RRKY…RALD). Positions 89-100 (PRQHNELRREET) are enriched in basic and acidic residues. The span at 142-151 (SRPPLPPPEV) shows a compositional bias: pro residues. Polar residues predominate over residues 167–180 (GSQTKESATVSSPA). Residues S183 and S219 each carry the phosphoserine modification. Residues 188–230 (RALDHYLTLRSSGWIPDGRGRWIKDENVEFDSDEEEPPDLPLD) are required for interaction with LUC7L2.

Component of the minor spliceosome. Within this complex, interacts with RNF113A, as well as with SF3B1/SF3b155, SF3B2/SF3b145, SF3B3/SF3b130 and CDC5L. May interact with LUC7L2 and SNRNP70.

It is found in the nucleus. Its subcellular location is the nucleoplasm. The protein localises to the nucleus speckle. As a component of the minor spliceosome, involved in the splicing of U12-type introns in pre-mRNAs. Plays a role in the regulation of primary cilia length and Hedgehog signaling. The polypeptide is Sodium channel modifier 1 (SCNM1) (Bos taurus (Bovine)).